Consider the following 130-residue polypeptide: Small ribosomal subunit protein uS11 (130 aa).

It belongs to the universal ribosomal protein uS11 family. As to quaternary structure, part of the 30S ribosomal subunit. Interacts with proteins S7 and S18. Binds to IF-3.

In terms of biological role, located on the platform of the 30S subunit, it bridges several disparate RNA helices of the 16S rRNA. Forms part of the Shine-Dalgarno cleft in the 70S ribosome. The protein is Small ribosomal subunit protein uS11 of Shewanella baltica (strain OS223).